The primary structure comprises 950 residues: UvrABC system protein A (950 aa).

36–43 (GKSGSGKS) contributes to the ATP binding site. The segment at 260 to 287 (CPLCGFSLPLIEPRLFSFNSPFGACSEC) adopts a C4-type zinc-finger fold. ABC transporter domains are found at residues 317–599 (FKTS…KNSL) and 619–947 (ADKG…MFLK). 651-658 (GVSGSGKS) provides a ligand contact to ATP. A C4-type zinc finger spans residues 750-776 (CEKCQGDGYLNIQMHFLPDVFVPCDLC).

Belongs to the ABC transporter superfamily. UvrA family. As to quaternary structure, forms a heterotetramer with UvrB during the search for lesions.

The protein resides in the cytoplasm. Its function is as follows. The UvrABC repair system catalyzes the recognition and processing of DNA lesions. UvrA is an ATPase and a DNA-binding protein. A damage recognition complex composed of 2 UvrA and 2 UvrB subunits scans DNA for abnormalities. When the presence of a lesion has been verified by UvrB, the UvrA molecules dissociate. The sequence is that of UvrABC system protein A from Borreliella burgdorferi (strain ATCC 35210 / DSM 4680 / CIP 102532 / B31) (Borrelia burgdorferi).